Reading from the N-terminus, the 129-residue chain is Follitropin subunit beta (129 aa).

The signal sequence occupies residues 1–18 (MKSIQFCFFFCCWKAICC). 6 disulfide bridges follow: Cys21-Cys69, Cys35-Cys84, Cys38-Cys122, Cys46-Cys100, Cys50-Cys102, and Cys105-Cys112. Asn25 and Asn42 each carry an N-linked (GlcNAc...) asparagine glycan.

This sequence belongs to the glycoprotein hormones subunit beta family. As to quaternary structure, heterodimer. The active follitropin is a heterodimer composed of an alpha chain/CGA shared with other hormones and a unique beta chain/FSHB shown here.

The protein resides in the secreted. In terms of biological role, together with the alpha chain CGA constitutes follitropin, the follicle-stimulating hormone, and provides its biological specificity to the hormone heterodimer. Binds FSHR, a G protein-coupled receptor, on target cells to activate downstream signaling pathways. Follitropin is involved in follicle development and spermatogenesis in reproductive organs. This is Follitropin subunit beta (FSHB) from Cavia porcellus (Guinea pig).